Reading from the N-terminus, the 286-residue chain is E3 ubiquitin-protein ligase RNF170 (286 aa).

The Lumenal portion of the chain corresponds to 1-52; sequence MQRYWRFQDNKIQDICFGVLGESWIQRPVMARYYSEGQSLQQDDSFIEGVSD. Residues 53 to 73 traverse the membrane as a helical segment; the sequence is QVLVAVVVSLALTATLLYALL. Topologically, residues 74-229 are cytoplasmic; sequence RNVQQNIHPE…GGLFWMFRIR (156 aa). The RING-type zinc-finger motif lies at 115-158; it reads CPICLHQASFPVETNCGHLFCGSCIIAYWRYGSWLGAISCPICR. A helical membrane pass occupies residues 230–250; sequence IMLCLMGAFFYLISPLDFVPE. A topological domain (lumenal) is located at residue Ala251. Residues 252 to 272 form a helical membrane-spanning segment; sequence LFGILGFLDDFFVIFLLLIYI. Residues 273–286 lie on the Cytoplasmic side of the membrane; sequence SIMYREVITQRLTR.

Constitutively associated with the ERLIN1/ERLIN 2 complex. Interacts with activated ITPR1.

It is found in the endoplasmic reticulum membrane. It catalyses the reaction S-ubiquitinyl-[E2 ubiquitin-conjugating enzyme]-L-cysteine + [acceptor protein]-L-lysine = [E2 ubiquitin-conjugating enzyme]-L-cysteine + N(6)-ubiquitinyl-[acceptor protein]-L-lysine.. Its pathway is protein modification; protein ubiquitination. Functionally, E3 ubiquitin-protein ligase that plays an essential role in stimulus-induced inositol 1,4,5-trisphosphate receptor type 1 (ITPR1) ubiquitination and degradation via the endoplasmic reticulum-associated degradation (ERAD) pathway. Also involved in ITPR1 turnover in resting cells. Selectively inhibits the TLR3-triggered innate immune response by promoting the 'Lys-48'-linked polyubiquitination and degradation of TLR3. This is E3 ubiquitin-protein ligase RNF170 (Rnf170) from Mus musculus (Mouse).